The chain runs to 55 residues: Large ribosomal subunit protein bL33 (55 aa).

A compositionally biased stretch (basic and acidic residues) spans 1-10 (MAKGGREKIK). Residues 1–27 (MAKGGREKIKLQSTAGTGHFYTTDKNK) form a disordered region.

This sequence belongs to the bacterial ribosomal protein bL33 family.

The sequence is that of Large ribosomal subunit protein bL33 from Polaromonas naphthalenivorans (strain CJ2).